Reading from the N-terminus, the 499-residue chain is Probable malate:quinone oxidoreductase 4 (499 aa).

The protein belongs to the MQO family. FAD serves as cofactor.

The enzyme catalyses (S)-malate + a quinone = a quinol + oxaloacetate. It functions in the pathway carbohydrate metabolism; tricarboxylic acid cycle; oxaloacetate from (S)-malate (quinone route): step 1/1. The protein is Probable malate:quinone oxidoreductase 4 of Staphylococcus epidermidis (strain ATCC 12228 / FDA PCI 1200).